The chain runs to 64 residues: uncharacterized protein (64 aa).

Residues 1 to 26 form the signal peptide; the sequence is MVVKENFCGACLTIPLAFAGAGTAIG. The helical transmembrane segment at 33–53 threads the bilayer; sequence IKKWSIVITIISLLLTVWFIY.

This sequence belongs to the IIV-6 010R family.

Its subcellular location is the host membrane. This is an uncharacterized protein from Aedes vexans (Inland floodwater mosquito).